A 229-amino-acid polypeptide reads, in one-letter code: N-acetyltransferase MPR1 (229 aa).

Residues 65-219 (FNLEIESGKT…DAIIYGKDLT (155 aa)) enclose the N-acetyltransferase domain. A substrate-binding site is contributed by Asn135. Residue 145–150 (RGQKVG) coordinates CoA. Position 172–173 (172–173 (NL)) interacts with substrate.

It belongs to the acetyltransferase family. In terms of assembly, homodimer. Not glycosylated.

Its subcellular location is the cytoplasm. The protein localises to the mitochondrion. The enzyme catalyses L-glutamate 5-semialdehyde + acetyl-CoA = N-acetyl-L-glutamate 5-semialdehyde + CoA + H(+). Its function is as follows. N-acetyltransferase involved in oxidative stress resistance. Acetylates the toxic proline metabolism intermediate (S)-1-pyrroline-5-carboxylate (P5C), or more likely its spontaneously forming tautomer glutamate-5-semialdehyde (GSA) into N-acetyl-GSA for arginine synthesis in the mitochondria. P5C has been shown to increase the levels of reactive oxygen species (ROS) in the cell by inhibiting the function of the respiratory chain in the mitochondria. The enzyme is able to reduce intracellular ROS levels under P5C-induced oxidative stress and protects cells from damage by oxidative stress. Also acetylates and thereby detoxifies the proline analog azetidine-2-carboxylate (AZC), however it is unlikely that AZC is a natural substrate as it occurs only in plants belonging to the Lilaceae family. Does not acetylate proline. The chain is N-acetyltransferase MPR1 from Saccharomyces cerevisiae (Baker's yeast).